The sequence spans 149 residues: Arginine repressor (149 aa).

It belongs to the ArgR family.

It localises to the cytoplasm. It functions in the pathway amino-acid biosynthesis; L-arginine biosynthesis [regulation]. In terms of biological role, regulates arginine biosynthesis genes. In Exiguobacterium sp. (strain ATCC BAA-1283 / AT1b), this protein is Arginine repressor.